Here is a 1238-residue protein sequence, read N- to C-terminus: MVRPVQVGNKTRMSFAKIDEVLEMPDLIEVQKKSYKWFLEEGLREVFREISPIESFTGNLALEFVDYRLENNPKYSVEECKDRDTTYAVPMKVKVRLTNRETGEIKESEVFMGDFPLMTEKGTFIINGAERVIVSQLVRSPGVYYEQQFDKFGKKLISATVIPNRGAWLEYEEDSNDIVYVRIDRTRKVPITVLLRALGYSTDIQILDLLGEEEKLKATLDKDTTKSEEEALIEIYKRLRPGEPPTVESAKSLLYALFFDAKRYDLAKVGRYKFNKKLALKTRIANLKSAKKIVNPVTGEILVEEGEKISKEKAEEIQNCGINVVEVLVEGKVVKVIGNNTVDINKYPMPYDVSSLNIKEAVNLSVLKEILDNFSDEEAVINEIKNRMDELVPKHITKDDIIATISYQLNLTHGIGSIDDIDHLGNRRLRSVGELLQNQFRIGLARLERVVKERMTIQDVNEITPQNLINIRPVVAAIREFFGSSQLSQFMDQTNPLAELTHKRRVSALGPGGLSRERAGFEVRDVHYSHYGRICPIETPEGPNIGLIGSLTTYARVNEYGFIEAPYRRVDKTTGTVTDEIVYMTADEEDEYIIAQANEPLDENNRFINEKVVCRLKEEIIAVPPTEVDFMDVSPKQIVSVATSMIPFLENDDANRALMGSNMQRQAVPLIKPEAPIIGTGIEYKAAVDSGVVVLAKNDGVVEKVAADKVVIRTKDGRRDEYNLLKFKRSNQGTCINQRPIVNEGDEVKKGQVICDGPSTDYGELALGKNVLVGFMPWEGYNYEDAILISEELVRDDSLTSIHIEEYDAEARDTKLGPEEITREIPNVGEDALKDLDERGIIRIGAEVTAGDILVGKVTPKGETELTAEERLLRAIFGEKAREVRDTSLRVPHGESGIVVDVKVYSRENGDELPPGVNQMVRVFVAQKRKISVGDKMAGRHGNKGVISRILPVEDMPFLPDGTPLQICLNPLGVPSRMNIGQVLEVHLGLVAKALGWQIATPVFDGATEEDIQELLAKSGFSPDGKVQLYDGRTGEPFDNKVTVGYMYMLKLHHLVDDKMHARSTGPYSLVTQQPLGGKAQFGGQRFGEMEVWALEAYGAAHTLQEILTVKSDDVSGRVKTYEAIVKGENIPEPGIPESFKVLVKELQSLALDVKVITEDNQEIPLKEFEDDDDSDVPDATLNINIEGREDTPPEEVYEESYEEGFEEEIEELPEDIDFEPDSFDIENDDLDLEDFDI.

The segment at 1187-1238 (EGREDTPPEEVYEESYEEGFEEEIEELPEDIDFEPDSFDIENDDLDLEDFDI) is disordered. Residues 1193-1238 (PPEEVYEESYEEGFEEEIEELPEDIDFEPDSFDIENDDLDLEDFDI) show a composition bias toward acidic residues.

This sequence belongs to the RNA polymerase beta chain family. In terms of assembly, the RNAP catalytic core consists of 2 alpha, 1 beta, 1 beta' and 1 omega subunit. When a sigma factor is associated with the core the holoenzyme is formed, which can initiate transcription.

It catalyses the reaction RNA(n) + a ribonucleoside 5'-triphosphate = RNA(n+1) + diphosphate. In terms of biological role, DNA-dependent RNA polymerase catalyzes the transcription of DNA into RNA using the four ribonucleoside triphosphates as substrates. This chain is DNA-directed RNA polymerase subunit beta, found in Thermoanaerobacter pseudethanolicus (strain ATCC 33223 / 39E) (Clostridium thermohydrosulfuricum).